The chain runs to 7311 residues: MAM and LDL-receptor class A domain-containing protein 2 (7311 aa).

MAM domains follow at residues 4–171 (AYCD…SCVT), 199–361 (LDCD…FCSP), 363–530 (KQCT…VCPP), 532–695 (GDCN…NCPV), 727–887 (YDCT…QCPV), 889–1050 (MQCS…ACPL), 1052–1220 (GDCT…RCRL), 1228–1392 (FDCN…SCPS), 1394–1557 (GMCS…SCPA), 1559–1722 (GDCS…NCIQ), 1755–1918 (NDCN…KCPS), 1920–2087 (TDCT…PCPL), 2089–2254 (GDCD…RCSV), 2274–2437 (NNCT…PCPP), 2439–2601 (TVCD…PCPP), and 2603–2771 (GSCD…YCVG). Positions 2461–2481 (WKRDSGGTPSAGTGPSRDHTT) are disordered. Low complexity predominate over residues 2466–2475 (GGTPSAGTGP). 2 P-type domains span residues 2771 to 2817 (GLCS…FYHP) and 2818 to 2862 (SACA…FHGP). Disulfide bonds link Cys-2773-Cys-2802, Cys-2784-Cys-2801, Cys-2795-Cys-2813, Cys-2820-Cys-2847, Cys-2831-Cys-2846, and Cys-2841-Cys-2858. MAM domains follow at residues 2883–3048 (WDCT…TCPP), 3050–3214 (RECD…PCPP), 3216–3384 (GSCD…FCPS), and 3429–3587 (GACT…NCTL). In terms of domain architecture, LDL-receptor class A 1 spans 3593–3628 (SCGQQHRCIRGSCIDRGRVCDYTDDCGDNSDEQNCY). Disulfide bonds link Cys-3594–Cys-3605, Cys-3600–Cys-3618, and Cys-3612–Cys-3627. The MAM 21 domain occupies 3632-3794 (YRCSFEKSLC…DLSMTSSCQS (163 aa)). 2 consecutive LDL-receptor class A domains span residues 3814–3850 (PCPR…VNCG) and 4016–4054 (SCIS…STCA). 3 disulfides stabilise this stretch: Cys-3815/Cys-3827, Cys-3822/Cys-3840, and Cys-3834/Cys-3849. One can recognise an MAM 22 domain in the interval 3850 to 4011 (GSCSFEPGLC…DDVTFQGCAL (162 aa)). 3 cysteine pairs are disulfide-bonded: Cys-4017–Cys-4029, Cys-4024–Cys-4042, and Cys-4036–Cys-4053. The MAM 23 domain occupies 4058–4221 (ERCNFEQDLC…DVSFTPNCRP (164 aa)). Residues 4239–4276 (GCQPGKFKCANGGNCISVSKVCNFYSDCSGGSDEMNCP) form the LDL-receptor class A 4 domain. 3 cysteine pairs are disulfide-bonded: Cys-4240–Cys-4253, Cys-4247–Cys-4266, and Cys-4260–Cys-4275. The MAM 24 domain occupies 4277–4438 (ATCNFQNSFC…DDVSFEHCAE (162 aa)). Residues 4444–4483 (TCSGLSVFRCQSGHCIAMSGKCDFEPDCCDGSEETNIVCA) enclose the LDL-receptor class A 5 domain. Intrachain disulfides connect Cys-4445/Cys-4458, Cys-4453/Cys-4471, and Cys-4465/Cys-4482. Residues 4486 to 4646 (NRCNFEAGLC…DISFTPDCVV (161 aa)) form the MAM 25 domain. 2 consecutive LDL-receptor class A domains span residues 4660-4699 (PTQP…DLCG) and 4859-4899 (YCSG…QSCS). Disulfide bonds link Cys-4668/Cys-4687, Cys-4681/Cys-4698, Cys-4860/Cys-4876, Cys-4871/Cys-4889, and Cys-4883/Cys-4898. In terms of domain architecture, MAM 26 spans 4700-4862 (WPCDFQRGTC…NNYTLTYCSG (163 aa)). The MAM 27 domain maps to 4903 to 5063 (SRCTFENGLC…SIAMKPSCQQ (161 aa)). The LDL-receptor class A 8 domain occupies 5085 to 5122 (NCVLPQVPCVSDGKCVSPSQVCDFNLDCADASDERSCP). 3 disulfides stabilise this stretch: Cys-5086–Cys-5099, Cys-5093–Cys-5112, and Cys-5106–Cys-5121. The MAM 28 domain maps to 5123–5281 (HMCTFESDQC…DDIKFVDCAL (159 aa)). An LDL-receptor class A 9 domain is found at 5287 to 5322 (SCPSQFTCARNSCVSNDYVCDFNDDCGDGSDETLCG). Disulfide bonds link Cys-5288–Cys-5299, Cys-5294–Cys-5312, and Cys-5306–Cys-5321. An MAM 29 domain is found at 5326–5489 (TRCDFSRGSC…DVSFTTGCKQ (164 aa)). The 40-residue stretch at 5513–5552 (QCTTAEFNCFNQGSGACIPSTQVCNFQPNCNDGVDEQNCA) folds into the LDL-receptor class A 10 domain. Intrachain disulfides connect Cys-5514-Cys-5529, Cys-5521-Cys-5542, and Cys-5536-Cys-5551. Residues 5554–5719 (TKCSFDGGDF…DDIEFLNCVP (166 aa)) enclose the MAM 30 domain. Residues 5725–5763 (KCTADEFQCARGGCIPKTSVCDFKADCMVGDVSDESSCS) form the LDL-receptor class A 11 domain. 3 disulfide bridges follow: Cys-5726/Cys-5738, Cys-5733/Cys-5751, and Cys-5745/Cys-5762. The MAM 31 domain maps to 5768 to 5935 (GQCDFEHGLC…LTPGCQICTD (168 aa)). Positions 5957-5993 (PCSLQQYVCKNLRCVDKAQICNFKDDCGDNSDELPCG) constitute an LDL-receptor class A 12 domain. 3 disulfide bridges follow: Cys-5958-Cys-5970, Cys-5965-Cys-5983, and Cys-5977-Cys-5992. The 163-residue stretch at 5994–6156 (SNCTFEGDCY…DISFTDNCFV (163 aa)) folds into the MAM 32 domain. The disordered stretch occupies residues 6014 to 6034 (NFHWRRRNGKTPSVGTGPTND). The segment covering 6023–6034 (KTPSVGTGPTND) has biased composition (polar residues). The LDL-receptor class A 13 domain occupies 6161-6200 (TCTPNEVKCRTSGHCVAEQRVCDHVKDCNDGTDEDALICS). 3 disulfide bridges follow: Cys-6162–Cys-6175, Cys-6169–Cys-6188, and Cys-6182–Cys-6199. An MAM 33 domain is found at 6204-6365 (ASCDFDVNWC…DISFSAGCYK (162 aa)). Positions 6377-6414 (RCSKVQFYCKADDLCINIHWKCDGEKDCTDGADEMLCP) constitute an LDL-receptor class A 14 domain. 3 cysteine pairs are disulfide-bonded: Cys-6378–Cys-6391, Cys-6385–Cys-6404, and Cys-6398–Cys-6413. MAM domains are found at residues 6430 to 6590 (ANCN…NCAK), 6606 to 6779 (LDED…NCDF), 6808 to 6965 (GDCT…QCQF), and 7173 to 7311 (GSCN…YNNL).

As to expression, component of the acid-insoluble and acid-soluble organic matrix of the aragonitic skeleton (at protein level).

It is found in the secreted. This chain is MAM and LDL-receptor class A domain-containing protein 2, found in Acropora millepora (Staghorn coral).